The primary structure comprises 223 residues: Transmembrane protein 114 (223 aa).

The helical transmembrane segment at G7–I27 threads the bilayer. N55 and N89 each carry an N-linked (GlcNAc...) asparagine glycan. Transmembrane regions (helical) follow at residues F106–L126, L134–I154, and L189–A209.

Belongs to the PMP-22/EMP/MP20 family.

The protein resides in the cell junction. Its subcellular location is the tight junction. It localises to the lateral cell membrane. The protein localises to the apical cell membrane. This Homo sapiens (Human) protein is Transmembrane protein 114.